Reading from the N-terminus, the 459-residue chain is MPQYQELPCGGQVLDIDTALKDGILGGGPELGDAAAGDGGKQPVELRKMMDELDAAGDGGGDEAVPAVFICPISLEPMVDPVTLCTGQTYESANISRWLALGHRTCPTTMQELWDVTPIPNTTLRQLIAAWFSRRYTRFKKRSADFHGRAAELVHALRGTAVPKRQPLKGQARVAALRELRSLAAAHQSVTKAIAEAGGVGLLTSLLGPFTSHAVGSEAVAILVSGVPLDADAKAALMQPAKVSLLVDMLNEGAVDTKINCVRLIRILMEEKGFRPDTVASLSLLVGVMRLVRDKRHPDGVAAGLELLNSICAVHKPARSLIVSIGAVPQLVELLPELPTECVEPALDILDALAAVPEGRIALKDCPRTITNAVRLLMRVSEACTRRALSMLWVVCRMAPEECAPAALDAGLGAKLLLVIQSGCGPELKQQASELLKLCTMNCTSTVFISKCKLTKTIQ.

The U-box domain occupies 64 to 138 (AVPAVFICPI…AAWFSRRYTR (75 aa)). ARM repeat units lie at residues 188-229 (QSVT…GVPL) and 231-270 (ADAK…ILME).

Interacts with GPA1. As to expression, expressed highly in panicles at flowering time, at moderate levels in vegetative shoot apices, leaf sheaths, leaf blades, and elongating internodes, and at low levels in roots.

The protein resides in the cell membrane. It carries out the reaction S-ubiquitinyl-[E2 ubiquitin-conjugating enzyme]-L-cysteine + [acceptor protein]-L-lysine = [E2 ubiquitin-conjugating enzyme]-L-cysteine + N(6)-ubiquitinyl-[acceptor protein]-L-lysine.. It participates in protein modification; protein ubiquitination. Its function is as follows. E3 ubiquitin ligase that may function as positive regulator of brassinosteroid (BR) signaling. Possesses E3 ubiquitin ligase in vitro. Acts together with the heterotrimeric G alpha subunit GPA1 at the plasma membrane to mediate a BR signaling pathway that affects plant growth and development. Does not seem to be involved in gibberellin or cytokinin responses. This chain is U-box domain-containing protein 75, found in Oryza sativa subsp. japonica (Rice).